A 218-amino-acid polypeptide reads, in one-letter code: Uridine kinase (218 aa).

16–23 (GGSGSGKT) contributes to the ATP binding site.

Belongs to the uridine kinase family.

Its subcellular location is the cytoplasm. It catalyses the reaction uridine + ATP = UMP + ADP + H(+). The catalysed reaction is cytidine + ATP = CMP + ADP + H(+). Its pathway is pyrimidine metabolism; CTP biosynthesis via salvage pathway; CTP from cytidine: step 1/3. It functions in the pathway pyrimidine metabolism; UMP biosynthesis via salvage pathway; UMP from uridine: step 1/1. The sequence is that of Uridine kinase from Limosilactobacillus reuteri (strain DSM 20016) (Lactobacillus reuteri).